The following is a 328-amino-acid chain: UPF0285 protein Mevan_1551 (328 aa).

It belongs to the UPF0285 family.

This is UPF0285 protein Mevan_1551 from Methanococcus vannielii (strain ATCC 35089 / DSM 1224 / JCM 13029 / OCM 148 / SB).